Here is a 207-residue protein sequence, read N- to C-terminus: Dephospho-CoA kinase (207 aa).

The DPCK domain occupies 5–203 (AVGLTGGIAC…ARYRALASVF (199 aa)). 13–18 (ACGKSL) is an ATP binding site.

It belongs to the CoaE family.

Its subcellular location is the cytoplasm. The enzyme catalyses 3'-dephospho-CoA + ATP = ADP + CoA + H(+). The protein operates within cofactor biosynthesis; coenzyme A biosynthesis; CoA from (R)-pantothenate: step 5/5. Catalyzes the phosphorylation of the 3'-hydroxyl group of dephosphocoenzyme A to form coenzyme A. In Xylella fastidiosa (strain 9a5c), this protein is Dephospho-CoA kinase.